The chain runs to 364 residues: Probable UDP-arabinopyranose mutase 4 (364 aa).

The DXD motif signature appears at 106 to 108 (DDD). N-linked (Glc...) arginine glycosylation occurs at R154.

Belongs to the RGP family. Heteromers with RGP1 and RGP2. Mn(2+) is required as a cofactor. Requires Mg(2+) as cofactor. Reversibly glycosylated in vitro by UDP-glucose, UDP-xylose and UDP-galactose, but not UDP-mannose. As to expression, specifically expressed in developing seeds.

The protein localises to the cytoplasm. It localises to the cytosol. It is found in the golgi apparatus. It carries out the reaction UDP-beta-L-arabinofuranose = UDP-beta-L-arabinopyranose. Its function is as follows. Probable UDP-L-arabinose mutase involved in the biosynthesis of cell wall non-cellulosic polysaccharides. The sequence is that of Probable UDP-arabinopyranose mutase 4 from Arabidopsis thaliana (Mouse-ear cress).